Here is a 118-residue protein sequence, read N- to C-terminus: MIQDYLIIGIFLIASFIFGMVVLLTASLVRPKKPNKEKLSTYECGVETTGSTWIRFKVSYFMYGLVFLLFDVETVFLLPWAVKFKSLGLFALFEMVIFIGILIIGLWYAWKEGALEWK.

A run of 3 helical transmembrane segments spans residues Leu-6 to Ala-26, Phe-61 to Ala-81, and Leu-87 to Trp-107.

The protein belongs to the complex I subunit 3 family. As to quaternary structure, NDH-1 is composed of 14 different subunits. Subunits NuoA, H, J, K, L, M, N constitute the membrane sector of the complex.

Its subcellular location is the cell membrane. It catalyses the reaction a quinone + NADH + 5 H(+)(in) = a quinol + NAD(+) + 4 H(+)(out). Functionally, NDH-1 shuttles electrons from NADH, via FMN and iron-sulfur (Fe-S) centers, to quinones in the respiratory chain. The immediate electron acceptor for the enzyme in this species is believed to be a menaquinone. Couples the redox reaction to proton translocation (for every two electrons transferred, four hydrogen ions are translocated across the cytoplasmic membrane), and thus conserves the redox energy in a proton gradient. The sequence is that of NADH-quinone oxidoreductase subunit A from Clostridium beijerinckii (strain ATCC 51743 / NCIMB 8052) (Clostridium acetobutylicum).